A 314-amino-acid polypeptide reads, in one-letter code: Probable cell division protein WhiA (314 aa).

Positions 274 to 308 (SLKELGEMVSTGPISKSGVNHRLRKLNDLADKIRN) form a DNA-binding region, H-T-H motif.

The protein belongs to the WhiA family.

Involved in cell division and chromosome segregation. This is Probable cell division protein WhiA from Staphylococcus aureus (strain USA300).